The primary structure comprises 907 residues: Alanine--tRNA ligase (907 aa).

Zn(2+)-binding residues include H581, H585, C683, and H687.

The protein belongs to the class-II aminoacyl-tRNA synthetase family. Zn(2+) is required as a cofactor.

Its subcellular location is the cytoplasm. It carries out the reaction tRNA(Ala) + L-alanine + ATP = L-alanyl-tRNA(Ala) + AMP + diphosphate. Functionally, catalyzes the attachment of alanine to tRNA(Ala) in a two-step reaction: alanine is first activated by ATP to form Ala-AMP and then transferred to the acceptor end of tRNA(Ala). Also edits incorrectly charged Ser-tRNA(Ala) and Gly-tRNA(Ala) via its editing domain. The chain is Alanine--tRNA ligase from Bdellovibrio bacteriovorus (strain ATCC 15356 / DSM 50701 / NCIMB 9529 / HD100).